A 182-amino-acid chain; its full sequence is ATP-dependent protease subunit HslV (182 aa).

The active site involves threonine 9. Residues alanine 167, cysteine 170, and threonine 173 each coordinate Na(+).

The protein belongs to the peptidase T1B family. HslV subfamily. As to quaternary structure, a double ring-shaped homohexamer of HslV is capped on each side by a ring-shaped HslU homohexamer. The assembly of the HslU/HslV complex is dependent on binding of ATP.

It localises to the cytoplasm. It catalyses the reaction ATP-dependent cleavage of peptide bonds with broad specificity.. With respect to regulation, allosterically activated by HslU binding. Functionally, protease subunit of a proteasome-like degradation complex believed to be a general protein degrading machinery. The sequence is that of ATP-dependent protease subunit HslV from Enterococcus faecalis (strain ATCC 700802 / V583).